We begin with the raw amino-acid sequence, 518 residues long: Circadian clock oscillator protein KaiC (518 aa).

A KaiC 1 domain is found at 1 to 247 (MTNLPEHQSS…FTINNGINIF (247 aa)). Residues Ser-49, Gly-50, Thr-51, Gly-52, Lys-53, Thr-54, and Leu-55 each coordinate ATP. Thr-54 is a binding site for Mg(2+). Glu-78 serves as the catalytic Proton acceptor in CI (KaiC 1). Ser-90 lines the ATP pocket. Positions 116–123 (QEVAGDFD) are B-loop, required to bind KaiB and SasA. ATP-binding residues include Lys-225, Leu-226, Arg-227, Thr-229, and His-231. Positions 248 to 260 (PLGAMRLTQRSSN) are linker. Residues 261 to 518 (VRVSSGVKTL…AKGMQDLESE (258 aa)) form the KaiC 2 domain. The ATP site is built by Thr-290, Gly-291, Thr-292, Gly-293, Lys-294, Thr-295, and Leu-296. Thr-295 is a Mg(2+) binding site. Glu-318 contacts Mg(2+). Glu-318 acts as the Proton acceptor in CII (KaiC 2) in catalysis. Trp-331 contributes to the ATP binding site. Ser-431 carries the post-translational modification Phosphoserine; by autocatalysis. Phosphothreonine; by autocatalysis is present on Thr-432. Residues Arg-451, Lys-457, Met-458, Arg-459, Ser-461, His-463, and Lys-465 each coordinate ATP. Residues 488 to 497 (GIISGTPTRI) are A-loop, interacts with KaiA.

It belongs to the KaiC family. In terms of assembly, homohexamer resembling 2 stacked donuts rings with a central pore nearly blocked on one side; hexamerization is dependent on ATP-binding. Binds 2 ATP per monomer, at the subunit interface on each ring. The KaiABC complex composition changes during the circadian cycle to control KaiC phosphorylation. Complexes KaiC(6), KaiA(2-4):KaiC(6), KaiB(6):KaiC(6) and KaiC(6):KaiB(6):KaiA(12) are among the most important forms, many form cooperatively. Interacts with SasA, probably as 1 SasA trimer:1 KaiC homohexamer, has highest affinity for unphosphorylated SasA. The CI domain binds to KaiB and SasA; as they have a similar fold they compete for the same site on CI. KaiB assumes a thioredoxin-like form called KaiB(fs) when bound to KaiC. Mg(2+) serves as cofactor. In terms of processing, phosphorylated on serine/threonine residues by autocatalysis. Both phosphorylated and unphosphorylated forms exist. Both autophosphorylates and autodephosphorylates. Phosphorylated form correlates with clock speed. Phosphorylated on serine and threonine residues by autocatalysis. Has a 4 step phosphorylation cycle; the autokinase acts first on Thr-432, then Ser-431. When Ser-431 is modified KaiC switches to an autophosphatase mode, acting first on phospho-Thr-432 then phospho-Ser-431.

It catalyses the reaction L-seryl-[protein] + ATP = O-phospho-L-seryl-[protein] + ADP + H(+). The enzyme catalyses L-threonyl-[protein] + ATP = O-phospho-L-threonyl-[protein] + ADP + H(+). It carries out the reaction ATP + H2O = ADP + phosphate + H(+). The interaction with KaiA enhances its phosphorylation status, while the interaction with KaiB decreases it. Its function is as follows. Central component of the KaiABC oscillator complex, which constitutes the main circadian regulator in cyanobacteria. Complex composition changes during the circadian cycle to control KaiC phosphorylation. KaiA stimulates KaiC autophosphorylation, while KaiB sequesters KaiA, leading to KaiC autodephosphorylation. Clock output pathways impact the RpaA transcriptional regulator. KaiC enhances the autophosphorylation activity of SasA, which then transfers its phosphate group to RpaA to activate it. KaiB and KaiC together enhance the phospho-RpaA dephosphatase activity of CikA. Stimulates SasA autophosphorylation. Fully phosphorylated KaiC (tested with phosphomimetic Asp-431-432-Asp) is the best stimulant, requires the ATPase activity of the CII domain. Unphosphorylated SasA associates with KaiC and its autophosphorylation activity is enhanced. Phospho-SasA is released and associates with RpaA, transferring its phosphate group. Formation of the KaiA:KaiB complex is promoted by KaiC, helping switch KaiC from its autophosphorylation to autodephosphatase function. In terms of biological role, has a weak, temperature-independent ATPase activity (about 14 molecules of ATP per day) that defines the circadian period. ATPase activity is mostly contributed by the CI domain; the CII domain augments the activity. The addition of KaiA increases activity. ATPase is inhibited during the KaiC phosphorylating phase and activated during the KaiC dephosphorylating phase. This chain is Circadian clock oscillator protein KaiC, found in Thermosynechococcus vestitus (strain NIES-2133 / IAM M-273 / BP-1).